The sequence spans 365 residues: S-adenosylmethionine decarboxylase proenzyme (365 aa).

Residues Glu31 and Glu34 contribute to the active site. Ser87 acts as the Schiff-base intermediate with substrate; via pyruvic acid in catalysis. At Ser87 the chain carries Pyruvic acid (Ser); by autocatalysis. The active-site Proton donor; for catalytic activity is the Cys101. Residues Ser248 and His263 each act as proton acceptor; for processing activity in the active site.

Belongs to the eukaryotic AdoMetDC family. In terms of assembly, heterotetramer of two alpha and two beta chains. Requires pyruvate as cofactor. In terms of processing, is synthesized initially as an inactive proenzyme. Formation of the active enzyme involves a self-maturation process in which the active site pyruvoyl group is generated from an internal serine residue via an autocatalytic post-translational modification. Two non-identical subunits are generated from the proenzyme in this reaction, and the pyruvate is formed at the N-terminus of the alpha chain, which is derived from the carboxyl end of the proenzyme. The post-translation cleavage follows an unusual pathway, termed non-hydrolytic serinolysis, in which the side chain hydroxyl group of the serine supplies its oxygen atom to form the C-terminus of the beta chain, while the remainder of the serine residue undergoes an oxidative deamination to produce ammonia and the pyruvoyl group blocking the N-terminus of the alpha chain.

The catalysed reaction is S-adenosyl-L-methionine + H(+) = S-adenosyl 3-(methylsulfanyl)propylamine + CO2. It functions in the pathway amine and polyamine biosynthesis; S-adenosylmethioninamine biosynthesis; S-adenosylmethioninamine from S-adenosyl-L-methionine: step 1/1. The protein is S-adenosylmethionine decarboxylase proenzyme (smd-1) of Onchocerca volvulus.